The sequence spans 380 residues: MRKNRELLLVLFLVVFILFYFITARTADDPYYSNHREKFNGAAADDGDESLPFHQLTSVRSDDGYNRTSPFIFIGGVPRSGTTLMRAMLDAHPEVRCGEETRVIPRILNLRSQWKKSEKEWNRLQQAGVTGEVINNAISSFIMEIMVGHGDRAPRLCNKDPFTMKSAVYLKELFPNAKYLLMIRDGRATVNSIISRKVTITGFDLNDFRQCMTKWNAAIQIMVDQCESVGEKNCLKVYYEQLVLHPEAQMRRITEFLDIPWDDKVLHHEQLIGKDISLSNVERSSDQVVKPVNLDALIKWVGTIPEDVVADMDSVAPMLRRLGYDPNANPPNYGKPDELVAKKTEDVHKNGAEWYKKAVQVVNDPGRVDKPIVDNEVSKL.

Topologically, residues 1 to 6 (MRKNRE) are cytoplasmic. The helical; Signal-anchor for type II membrane protein transmembrane segment at 7–27 (LLLVLFLVVFILFYFITARTA) threads the bilayer. At 28–380 (DDPYYSNHRE…PIVDNEVSKL (353 aa)) the chain is on the lumenal side. An N-linked (GlcNAc...) asparagine glycan is attached at N66. Residue 79–83 (RSGTT) coordinates 3'-phosphoadenylyl sulfate. C97 and C157 are disulfide-bonded. E100 acts as the Proton donor/acceptor in catalysis. Residues 102–106 (RVIPR) form an interaction with peptide substrate region. R184, S192, and R196 together coordinate 3'-phosphoadenylyl sulfate. An intrachain disulfide couples C226 to C234. 3'-phosphoadenylyl sulfate contacts are provided by residues Y239, 284-293 (SSDQVVKPVN), and K299.

Belongs to the protein sulfotransferase family.

It localises to the golgi apparatus membrane. It catalyses the reaction L-tyrosyl-[protein] + 3'-phosphoadenylyl sulfate = O-sulfo-L-tyrosine-[protein] + adenosine 3',5'-bisphosphate + H(+). Its function is as follows. Catalyzes the O-sulfation of tyrosine residues within acidic motifs of polypeptides, using 3'-phosphoadenylyl sulfate (PAPS) as cosubstrate. This Caenorhabditis elegans protein is Protein-tyrosine sulfotransferase A (tpst-1).